We begin with the raw amino-acid sequence, 618 residues long: Baculoviral IAP repeat-containing protein 2 (618 aa).

BIR repeat units lie at residues 46–113 (ELYR…CSFI), 184–250 (EEAR…CPFL), and 269–336 (HAAR…CEFL). Cys306, Cys309, His326, and Cys333 together coordinate Zn(2+). The CARD domain maps to 453–543 (MASDDLSLIR…TLYKNLFVDK (91 aa)). The segment at 571 to 606 (CKVCMDKEVSVVFIPCGHLVVCQECAPSLRKCPICR) adopts an RING-type zinc-finger fold.

The protein belongs to the IAP family. As to quaternary structure, interacts with DIABLO/SMAC and with PRSS25; these interactions inhibit apoptotic suppressor activity. Interacts with CASP9. Interacts (via BIR domains) with TRAF2; the interaction is required for IKBKE ubiquitination. Interacts with E2F1, RIPK1, RIPK2, RIPK3, RIPK4, BIRC5/survivin and USP19. HSP90AB1. Interacts with UBXN1. Interacts with GSK3B. Interacts with several death receptors, inclusing FAS, TNFRSF10A and TNFRSF10B. Recruited to TNFRSF10B in the absence of receptor stimulation. When TNFRSF10B is stimulated, further recruited to the receptor and cleaved by caspases. Proteolytic fragments remain associated with TNFRSF10B. Post-translationally, auto-ubiquitinated and degraded by the proteasome in apoptotic cells. Upon stimulation of death receptors, including TNFRSF10B, recruited to receptors and cleaved by caspases. Proteolytic fragments remain associated with the receptors. This cleavage presumably inactivates the protein. In terms of tissue distribution, present in many fetal and adult tissues. Mainly expressed in adult skeletal muscle, thymus, testis, ovary, and pancreas, low or absent in brain and peripheral blood leukocytes.

The protein localises to the cytoplasm. It is found in the nucleus. It carries out the reaction S-ubiquitinyl-[E2 ubiquitin-conjugating enzyme]-L-cysteine + [acceptor protein]-L-lysine = [E2 ubiquitin-conjugating enzyme]-L-cysteine + N(6)-ubiquitinyl-[acceptor protein]-L-lysine.. The CARD domain inhibits the activation of E3 ubiquitin ligase activity by preventing RING domain dimerization and E2 ubiquitin donor binding and activation. The CARD domain-mediated autoinhibition of the E3 ubiquitin-protein ligase activity suppresses cell proliferation and migration. USP19 regulates the stability of BIRC2/c-IAP1 by preventing its ubiquitination. Functionally, multi-functional protein which regulates not only caspases and apoptosis, but also modulates inflammatory signaling and immunity, mitogenic kinase signaling, and cell proliferation, as well as cell invasion and metastasis. Acts as an E3 ubiquitin-protein ligase regulating NF-kappa-B signaling and regulates both canonical and non-canonical NF-kappa-B signaling by acting in opposite directions: acts as a positive regulator of the canonical pathway and suppresses constitutive activation of non-canonical NF-kappa-B signaling. The target proteins for its E3 ubiquitin-protein ligase activity include: RIPK1, RIPK2, RIPK3, RIPK4, CASP3, CASP7, CASP8, TRAF2, DIABLO/SMAC, MAP3K14/NIK, MAP3K5/ASK1, IKBKG/NEMO, IKBKE and MXD1/MAD1. Can also function as an E3 ubiquitin-protein ligase of the NEDD8 conjugation pathway, targeting effector caspases for neddylation and inactivation. Acts as an important regulator of innate immune signaling via regulation of Toll-like receptors (TLRs), Nodlike receptors (NLRs) and RIG-I like receptors (RLRs), collectively referred to as pattern recognition receptors (PRRs). Protects cells from spontaneous formation of the ripoptosome, a large multi-protein complex that has the capability to kill cancer cells in a caspase-dependent and caspase-independent manner. Suppresses ripoptosome formation by ubiquitinating RIPK1 and CASP8. Can stimulate the transcriptional activity of E2F1. Plays a role in the modulation of the cell cycle. This Homo sapiens (Human) protein is Baculoviral IAP repeat-containing protein 2 (BIRC2).